Reading from the N-terminus, the 168-residue chain is 2-C-methyl-D-erythritol 2,4-cyclodiphosphate synthase (168 aa).

Positions 13 and 15 each coordinate a divalent metal cation. Residues 13–15 and 39–40 each bind 4-CDP-2-C-methyl-D-erythritol 2-phosphate; these read DVH and HS. Histidine 47 contributes to the a divalent metal cation binding site. Residues 61–63, 66–70, phenylalanine 144, and arginine 147 each bind 4-CDP-2-C-methyl-D-erythritol 2-phosphate; these read DIG and FPDTD.

This sequence belongs to the IspF family. Homotrimer. Requires a divalent metal cation as cofactor.

The catalysed reaction is 4-CDP-2-C-methyl-D-erythritol 2-phosphate = 2-C-methyl-D-erythritol 2,4-cyclic diphosphate + CMP. Its pathway is isoprenoid biosynthesis; isopentenyl diphosphate biosynthesis via DXP pathway; isopentenyl diphosphate from 1-deoxy-D-xylulose 5-phosphate: step 4/6. Involved in the biosynthesis of isopentenyl diphosphate (IPP) and dimethylallyl diphosphate (DMAPP), two major building blocks of isoprenoid compounds. Catalyzes the conversion of 4-diphosphocytidyl-2-C-methyl-D-erythritol 2-phosphate (CDP-ME2P) to 2-C-methyl-D-erythritol 2,4-cyclodiphosphate (ME-CPP) with a corresponding release of cytidine 5-monophosphate (CMP). This Ralstonia nicotianae (strain ATCC BAA-1114 / GMI1000) (Ralstonia solanacearum) protein is 2-C-methyl-D-erythritol 2,4-cyclodiphosphate synthase.